The primary structure comprises 609 residues: Alpha-fetoprotein (609 aa).

Residues 1–18 (MKWVVSILLIFLLNSTES) form the signal peptide. Albumin domains are found at residues 19-210 (RTMH…ATIT), 211-402 (KELR…EELQ), and 403-601 (KYIQ…QLIS). Histidine 22 contacts Cu(2+). 8 disulfide bridges follow: cysteine 99-cysteine 114, cysteine 113-cysteine 124, cysteine 148-cysteine 193, cysteine 192-cysteine 201, cysteine 224-cysteine 270, cysteine 269-cysteine 277, cysteine 289-cysteine 303, and cysteine 302-cysteine 313. A phosphoserine mark is found at serine 111 and serine 115. The N-linked (GlcNAc...) asparagine glycan is linked to asparagine 251. Serine 344 carries the post-translational modification Phosphoserine. 7 disulfides stabilise this stretch: cysteine 384/cysteine 393, cysteine 416/cysteine 462, cysteine 461/cysteine 472, cysteine 485/cysteine 501, cysteine 500/cysteine 511, cysteine 538/cysteine 583, and cysteine 582/cysteine 591.

Belongs to the ALB/AFP/VDB family. As to quaternary structure, dimeric and trimeric forms have been found in addition to the monomeric form. Post-translationally, sulfated. In terms of tissue distribution, plasma.

The protein resides in the secreted. In terms of biological role, binds copper, nickel, and fatty acids as well as, and bilirubin less well than, serum albumin. The chain is Alpha-fetoprotein (AFP) from Equus caballus (Horse).